The primary structure comprises 101 residues: Small ribosomal subunit protein uS14 (101 aa).

Belongs to the universal ribosomal protein uS14 family. Part of the 30S ribosomal subunit. Contacts proteins S3 and S10.

Functionally, binds 16S rRNA, required for the assembly of 30S particles and may also be responsible for determining the conformation of the 16S rRNA at the A site. In Bartonella bacilliformis (strain ATCC 35685 / KC583 / Herrer 020/F12,63), this protein is Small ribosomal subunit protein uS14.